Consider the following 363-residue polypeptide: U-box domain-containing protein 62 (363 aa).

A disordered region spans residues 74-117; that stretch reads KPIIGNPNDSGGSDGEDDVDVEEEDEDDDLDGNEGDIGMNKDAG. Residues 87–107 show a composition bias toward acidic residues; that stretch reads DGEDDVDVEEEDEDDDLDGNE. Positions 181-253 constitute a U-box domain; sequence SLRTILSDPT…QAFCREENSQ (73 aa). The tract at residues 343 to 363 is disordered; it reads AKAPEDPSAKATPNKMVSNWL.

It catalyses the reaction S-ubiquitinyl-[E2 ubiquitin-conjugating enzyme]-L-cysteine + [acceptor protein]-L-lysine = [E2 ubiquitin-conjugating enzyme]-L-cysteine + N(6)-ubiquitinyl-[acceptor protein]-L-lysine.. The protein operates within protein modification; protein ubiquitination. In terms of biological role, functions as an E3 ubiquitin ligase. The sequence is that of U-box domain-containing protein 62 (PUB62) from Arabidopsis thaliana (Mouse-ear cress).